Reading from the N-terminus, the 360-residue chain is Peptide chain release factor 1 (360 aa).

Gln235 is modified (N5-methylglutamine). A compositionally biased stretch (basic and acidic residues) spans 285 to 308 (KRQEAEASERRNLLGSGDRSDRNR). The segment at 285–313 (KRQEAEASERRNLLGSGDRSDRNRTYNFP) is disordered.

This sequence belongs to the prokaryotic/mitochondrial release factor family. Post-translationally, methylated by PrmC. Methylation increases the termination efficiency of RF1.

Its subcellular location is the cytoplasm. Peptide chain release factor 1 directs the termination of translation in response to the peptide chain termination codons UAG and UAA. The sequence is that of Peptide chain release factor 1 from Photorhabdus laumondii subsp. laumondii (strain DSM 15139 / CIP 105565 / TT01) (Photorhabdus luminescens subsp. laumondii).